Consider the following 397-residue polypeptide: Phosphoglycerate kinase (397 aa).

Residues 21–23 (DFN), Arg37, 60–63 (HLGR), Arg119, and Arg152 contribute to the substrate site. ATP is bound by residues Lys203, Gly294, Glu325, and 354-357 (GGDS).

Belongs to the phosphoglycerate kinase family. Monomer.

It is found in the cytoplasm. The enzyme catalyses (2R)-3-phosphoglycerate + ATP = (2R)-3-phospho-glyceroyl phosphate + ADP. The protein operates within carbohydrate degradation; glycolysis; pyruvate from D-glyceraldehyde 3-phosphate: step 2/5. This Chlorobaculum tepidum (strain ATCC 49652 / DSM 12025 / NBRC 103806 / TLS) (Chlorobium tepidum) protein is Phosphoglycerate kinase.